The primary structure comprises 644 residues: MVAITLPDGSVKNFEGNTTVMEVAQSIGTGLAKATVAGRVDGQLVDAHDPIAHDAKVEIVTPKDDDGVDIIRHSCAHLLGHAVKQLYPDVKMVIGPVIDDGFYYDIYSETPFTPEHMAAIEKRMMELIKQDYDVIKKITPRAEVIRIFEERGEEYKLKLINDMPGEEAFGLYHHQEYVDMCRGPHVPNTRFLKVFKLTKMSGAYWRGDAKNEQLQRIYGTAWADKKDLKAYIQRIEEAEKRDHRKIGKALNLFHMQEQAPGMVFWHANGWTIYQVLEQYMRKVQHDNGYEEIKTPQIVDRSLWERSGHWGNYATNMFTTSSENRDYAVKPMNCPCHVQVFNQGLKSYRDLPLRMAEFGSCHRNEPSGSLHGLMRVRGFTQDDAHIFCTQSQIQQEVADFIKLTLAVYEDFGFDKIIMKLSTRPEKRVGSDESWDFAEKALADALDSSGLDWAYLPGEGAFYGPKIEFSLKDSLGRVWQCGTIQVDPNMPERLDAEFVNEQNEREVPIMLHRAILGSFERFIGILIENYAGWMPVWLAPQQVVVMNITDKQADACENVVNELKKAGLRAISDLRNEKIGFKIREKTLERIPYMLVLGDKEVESGSINVRTREGENLGVMSVAEFITLVEAAVAEKGRQIPKIDQE.

The 61-residue stretch at 1 to 61 (MVAITLPDGS…AHDAKVEIVT (61 aa)) folds into the TGS domain. The segment at 242 to 533 (DHRKIGKALN…LIENYAGWMP (292 aa)) is catalytic. Residues cysteine 333, histidine 384, and histidine 510 each coordinate Zn(2+).

This sequence belongs to the class-II aminoacyl-tRNA synthetase family. In terms of assembly, homodimer. Zn(2+) is required as a cofactor.

It localises to the cytoplasm. It carries out the reaction tRNA(Thr) + L-threonine + ATP = L-threonyl-tRNA(Thr) + AMP + diphosphate + H(+). Its function is as follows. Catalyzes the attachment of threonine to tRNA(Thr) in a two-step reaction: L-threonine is first activated by ATP to form Thr-AMP and then transferred to the acceptor end of tRNA(Thr). Also edits incorrectly charged L-seryl-tRNA(Thr). This is Threonine--tRNA ligase from Psychrobacter cryohalolentis (strain ATCC BAA-1226 / DSM 17306 / VKM B-2378 / K5).